A 582-amino-acid chain; its full sequence is V-type ATP synthase alpha chain (582 aa).

An ATP-binding site is contributed by 231 to 238 (GPFGSGKT).

The protein belongs to the ATPase alpha/beta chains family.

The enzyme catalyses ATP + H2O + 4 H(+)(in) = ADP + phosphate + 5 H(+)(out). Functionally, produces ATP from ADP in the presence of a proton gradient across the membrane. The V-type alpha chain is a catalytic subunit. This chain is V-type ATP synthase alpha chain, found in Deinococcus deserti (strain DSM 17065 / CIP 109153 / LMG 22923 / VCD115).